A 207-amino-acid polypeptide reads, in one-letter code: Urease accessory protein UreG (207 aa).

16 to 23 contributes to the GTP binding site; sequence GPVGSGKT.

This sequence belongs to the SIMIBI class G3E GTPase family. UreG subfamily. Homodimer. UreD, UreF and UreG form a complex that acts as a GTP-hydrolysis-dependent molecular chaperone, activating the urease apoprotein by helping to assemble the nickel containing metallocenter of UreC. The UreE protein probably delivers the nickel.

It is found in the cytoplasm. Facilitates the functional incorporation of the urease nickel metallocenter. This process requires GTP hydrolysis, probably effectuated by UreG. The protein is Urease accessory protein UreG of Blochmanniella pennsylvanica (strain BPEN).